Consider the following 247-residue polypeptide: ATP synthase subunit a, chloroplastic (247 aa).

5 helical membrane-spanning segments follow: residues 38-58 (QVLITSWVVIAILLGSVTIAV), 95-115 (VPFIGTMFLFIFVSNWSGALF), 134-154 (INTTVALALPTSVAYFYAGLT), 199-219 (LVVVVLVSLVPSVVPIPVMFL), and 220-240 (GLFTSGIQALIFATLAAAYIG).

This sequence belongs to the ATPase A chain family. As to quaternary structure, F-type ATPases have 2 components, CF(1) - the catalytic core - and CF(0) - the membrane proton channel. CF(1) has five subunits: alpha(3), beta(3), gamma(1), delta(1), epsilon(1). CF(0) has four main subunits: a, b, b' and c.

The protein resides in the plastid. Its subcellular location is the chloroplast thylakoid membrane. Its function is as follows. Key component of the proton channel; it plays a direct role in the translocation of protons across the membrane. This Piper cenocladum (Ant piper) protein is ATP synthase subunit a, chloroplastic.